The primary structure comprises 459 residues: ATP-dependent protease ATPase subunit HslU (459 aa).

ATP-binding positions include valine 26, glycine 68 to glutamate 73, aspartate 271, glutamate 337, and arginine 409.

The protein belongs to the ClpX chaperone family. HslU subfamily. In terms of assembly, a double ring-shaped homohexamer of HslV is capped on each side by a ring-shaped HslU homohexamer. The assembly of the HslU/HslV complex is dependent on binding of ATP.

Its subcellular location is the cytoplasm. In terms of biological role, ATPase subunit of a proteasome-like degradation complex; this subunit has chaperone activity. The binding of ATP and its subsequent hydrolysis by HslU are essential for unfolding of protein substrates subsequently hydrolyzed by HslV. HslU recognizes the N-terminal part of its protein substrates and unfolds these before they are guided to HslV for hydrolysis. The protein is ATP-dependent protease ATPase subunit HslU of Xylella fastidiosa (strain M12).